The following is a 1414-amino-acid chain: Phenyloxazoline synthase MbtB (1414 aa).

In terms of domain architecture, Carrier 1 spans 5 to 78; it reads TACSEIIRAE…AWSQLVSAGT (74 aa). An O-(pantetheine 4'-phosphoryl)serine modification is found at Ser39. Positions 96–394 are condensation/cyclization; sequence EGEPFPVAPM…SSLLLDVDLT (299 aa). The interval 579-975 is adenylation; sequence SYAQLRDQAS…RLPGVHAAAA (397 aa). Residues 1057-1135 enclose the Carrier 2 domain; that stretch reads APRTVLQRAL…ALAQLLTGRE (79 aa). Ser1094 is modified (O-(pantetheine 4'-phosphoryl)serine). Residues 1188–1413 form a thioesterase region; sequence GAVLVFPHAG…AVARMVSADV (226 aa).

The protein belongs to the ATP-dependent AMP-binding enzyme family. MbtB subfamily. Requires pantetheine 4'-phosphate as cofactor. 4'-phosphopantetheine is transferred from CoA to a specific serine in each of the two carrier protein domains, leading to their activation from apo to holo forms.

The protein operates within siderophore biosynthesis; mycobactin biosynthesis. Functionally, involved in the initial steps of the mycobactin biosynthetic pathway. Putatively couples activated salicylic acid with serine or threonine and cyclizes this precursor to the hydroxyphenyloxazoline ring system present in this class of siderophores. Essential for growth in macrophages. This Mycobacterium tuberculosis (strain CDC 1551 / Oshkosh) protein is Phenyloxazoline synthase MbtB (mbtB).